A 371-amino-acid chain; its full sequence is Neutral protease 2 homolog MGYG_03465 (371 aa).

The first 19 residues, 1–19 (MQFVAVLAALGALVAPAAA), serve as a signal peptide directing secretion. Positions 20-188 (YPHAPMNETL…SIHARALEKR (169 aa)) are excised as a propeptide. 2 disulfides stabilise this stretch: Cys-196-Cys-267 and Cys-274-Cys-292. His-316 provides a ligand contact to Zn(2+). Glu-317 is an active-site residue. Residues His-320 and Asp-331 each contribute to the Zn(2+) site.

It belongs to the peptidase M35 family. It depends on Zn(2+) as a cofactor.

It is found in the secreted. It catalyses the reaction Preferential cleavage of bonds with hydrophobic residues in P1'. Also 3-Asn-|-Gln-4 and 8-Gly-|-Ser-9 bonds in insulin B chain.. Secreted metalloproteinase that allows assimilation of proteinaceous substrates. Shows high activities on basic nuclear substrates such as histone and protamine. May be involved in virulence. The chain is Neutral protease 2 homolog MGYG_03465 from Arthroderma gypseum (strain ATCC MYA-4604 / CBS 118893) (Microsporum gypseum).